The chain runs to 280 residues: Fructose-1,6-bisphosphatase class 1 (280 aa).

4 residues coordinate Mg(2+): Glu64, Asp83, Leu85, and Asp86. Substrate is bound by residues 86-89, Tyr189, and Lys220; that span reads DGSS. Glu226 contacts Mg(2+).

This sequence belongs to the FBPase class 1 family. In terms of assembly, homotetramer. Mg(2+) serves as cofactor.

The protein localises to the cytoplasm. It carries out the reaction beta-D-fructose 1,6-bisphosphate + H2O = beta-D-fructose 6-phosphate + phosphate. It functions in the pathway carbohydrate biosynthesis; gluconeogenesis. In Campylobacter jejuni subsp. doylei (strain ATCC BAA-1458 / RM4099 / 269.97), this protein is Fructose-1,6-bisphosphatase class 1.